The sequence spans 370 residues: Pantothenate kinase 3 (370 aa).

Glutamate 138 serves as the catalytic Proton acceptor. 3 residues coordinate acetyl-CoA: serine 192, serine 195, and arginine 207.

The protein belongs to the type II pantothenate kinase family. In terms of assembly, homodimer.

It is found in the cytoplasm. The enzyme catalyses (R)-pantothenate + ATP = (R)-4'-phosphopantothenate + ADP + H(+). It participates in cofactor biosynthesis; coenzyme A biosynthesis; CoA from (R)-pantothenate: step 1/5. Subject to allosteric regulation, exists in two distinct conformational states, a catalytically incompetent (or open) conformation stabilized by the binding of acetyl(acyl)-CoA, and a catalytically competent (or closed) conformation stabilized by ATP-binding. Inhibited by acetyl-CoA and its thioesters which act as allosteric inhibitors and compete with the ATP-binding site. Functionally, catalyzes the phosphorylation of pantothenate to generate 4'-phosphopantothenate in the first and rate-determining step of coenzyme A (CoA) synthesis. This Bos taurus (Bovine) protein is Pantothenate kinase 3 (PANK3).